A 669-amino-acid polypeptide reads, in one-letter code: Methionine--tRNA ligase (669 aa).

Residues 15–25 (PYANGPAHIGH) carry the 'HIGH' region motif. Positions 146, 149, 158, and 162 each coordinate Zn(2+). The 'KMSKS' region motif lies at 328 to 332 (KFSKS). Position 331 (Lys331) interacts with ATP. Residues 570-669 (QFKALDLRVG…KEVPAGCGIR (100 aa)) enclose the tRNA-binding domain.

The protein belongs to the class-I aminoacyl-tRNA synthetase family. MetG type 1 subfamily. Homodimer. The cofactor is Zn(2+).

It localises to the cytoplasm. The enzyme catalyses tRNA(Met) + L-methionine + ATP = L-methionyl-tRNA(Met) + AMP + diphosphate. Functionally, is required not only for elongation of protein synthesis but also for the initiation of all mRNA translation through initiator tRNA(fMet) aminoacylation. The chain is Methionine--tRNA ligase from Methanothrix thermoacetophila (strain DSM 6194 / JCM 14653 / NBRC 101360 / PT) (Methanosaeta thermophila).